Reading from the N-terminus, the 515-residue chain is 2,3-bisphosphoglycerate-independent phosphoglycerate mutase (515 aa).

Residues Asp-14 and Ser-63 each contribute to the Mn(2+) site. The active site involves Ser-63. Residues His-124, 154–155, Arg-186, Arg-192, 259–262, and Lys-334 contribute to the substrate site; these read RD and RADR. 5 residues coordinate Mn(2+): Asp-401, His-405, Asp-442, His-443, and His-460.

The protein belongs to the BPG-independent phosphoglycerate mutase family. It depends on Mg(2+) as a cofactor. Requires Mn(2+) as cofactor.

The catalysed reaction is (2R)-2-phosphoglycerate = (2R)-3-phosphoglycerate. Its pathway is carbohydrate degradation; glycolysis; pyruvate from D-glyceraldehyde 3-phosphate: step 3/5. Activity is not affected by 2,3-bisphosphoglycerate. Functionally, catalyzes the interconversion of 2-phosphoglycerate and 3-phosphoglycerate. The polypeptide is 2,3-bisphosphoglycerate-independent phosphoglycerate mutase (Brugia malayi (Filarial nematode worm)).